The chain runs to 267 residues: Glutamate 5-kinase (267 aa).

Residue lysine 17 participates in ATP binding. 3 residues coordinate substrate: serine 57, aspartate 144, and asparagine 156. ATP is bound by residues 176 to 177 (SD) and 218 to 224 (TGGMATK).

This sequence belongs to the glutamate 5-kinase family.

It localises to the cytoplasm. It catalyses the reaction L-glutamate + ATP = L-glutamyl 5-phosphate + ADP. The protein operates within amino-acid biosynthesis; L-proline biosynthesis; L-glutamate 5-semialdehyde from L-glutamate: step 1/2. Functionally, catalyzes the transfer of a phosphate group to glutamate to form L-glutamate 5-phosphate. The polypeptide is Glutamate 5-kinase (Clostridium acetobutylicum (strain ATCC 824 / DSM 792 / JCM 1419 / IAM 19013 / LMG 5710 / NBRC 13948 / NRRL B-527 / VKM B-1787 / 2291 / W)).